A 259-amino-acid chain; its full sequence is Probable metal transport system ATP-binding protein TC_0339 (259 aa).

Positions 9–241 (WAVDDLCVNY…AIFQAYGCEL (233 aa)) constitute an ABC transporter domain. Position 41–48 (41–48 (GPNGAGKS)) interacts with ATP.

This sequence belongs to the ABC transporter superfamily.

It is found in the cell inner membrane. Part of an ATP-driven transport system TC_0338/TC_0339/TC_0341/TC_0342 for a metal. Probably responsible for energy coupling to the transport system. In Chlamydia muridarum (strain MoPn / Nigg), this protein is Probable metal transport system ATP-binding protein TC_0339.